Here is a 133-residue protein sequence, read N- to C-terminus: Small ribosomal subunit protein uS8c (133 aa).

This sequence belongs to the universal ribosomal protein uS8 family. As to quaternary structure, part of the 30S ribosomal subunit.

It localises to the plastid. The protein localises to the chloroplast. In terms of biological role, one of the primary rRNA binding proteins, it binds directly to 16S rRNA central domain where it helps coordinate assembly of the platform of the 30S subunit. This Chlorokybus atmophyticus (Soil alga) protein is Small ribosomal subunit protein uS8c (rps8).